The following is a 201-amino-acid chain: MSPDLLGAVLVAAGYLAGSIPFGVVLGRLVLGVDVRTVGSGNIGATNVARAGGKKMGVLVLVLDAAKAIVPILLARRLLAGAPHAEAWSTAVAVAAFVGHLFPVWLGFKGGKGVATGLGIFAVLAPWAALAGLVGYAVAYGLTRISSVGSLTGTALCAAGGFATYGVRHPVPWAGLAIALLIFLRHRENIRRLVRGEEKKV.

The next 5 helical transmembrane spans lie at 5 to 25 (LLGAVLVAAGYLAGSIPFGVV), 55 to 75 (KMGVLVLVLDAAKAIVPILLA), 88 to 108 (WSTAVAVAAFVGHLFPVWLGF), 118 to 138 (LGIFAVLAPWAALAGLVGYAV), and 164 to 184 (TYGVRHPVPWAGLAIALLIFL).

It belongs to the PlsY family. As to quaternary structure, probably interacts with PlsX.

It localises to the cell inner membrane. The catalysed reaction is an acyl phosphate + sn-glycerol 3-phosphate = a 1-acyl-sn-glycero-3-phosphate + phosphate. It participates in lipid metabolism; phospholipid metabolism. In terms of biological role, catalyzes the transfer of an acyl group from acyl-phosphate (acyl-PO(4)) to glycerol-3-phosphate (G3P) to form lysophosphatidic acid (LPA). This enzyme utilizes acyl-phosphate as fatty acyl donor, but not acyl-CoA or acyl-ACP. The protein is Glycerol-3-phosphate acyltransferase of Anaeromyxobacter dehalogenans (strain 2CP-C).